Here is a 1009-residue protein sequence, read N- to C-terminus: Protein-tyrosine kinase 2-beta (1009 aa).

Residues 39–359 enclose the FERM domain; the sequence is RILKVCFYSN…GYCRLQGEHK (321 aa). A phosphoserine mark is found at Ser-361, Ser-375, and Ser-399. The residue at position 402 (Tyr-402) is a Phosphotyrosine; by autocatalysis. A Protein kinase domain is found at 425–683; the sequence is VVLNRILGEG…ELVCSLSDIY (259 aa). ATP-binding positions include 431–439, Lys-457, and 503–509; these read LGEGFFGEV and ELYPYGE. The active-site Proton acceptor is Asp-549. Phosphotyrosine occurs at positions 579, 580, and 722. Positions 702–725 are disordered; that stretch reads PKILEPTAFQEPPPKPSRPKYKHP. Ser-762 carries the post-translational modification Phosphoserine. A Phosphothreonine modification is found at Thr-765. The segment at 801–1009 is interaction with TGFB1I1; sequence KIKMRQVLDR…VANLAHPPAE (209 aa). Phosphotyrosine is present on Tyr-834. Residue Ser-839 is modified to Phosphoserine. Position 842 is a phosphothreonine (Thr-842). Tyr-849 bears the Phosphotyrosine mark. Residue Ser-866 is modified to Phosphoserine. Residues 868-1009 are focal adhesion targeting (FAT); it reads QPTANLDRTD…VANLAHPPAE (142 aa). Tyr-881 bears the Phosphotyrosine mark.

Belongs to the protein kinase superfamily. Tyr protein kinase family. FAK subfamily. Homodimer, or homooligomer. Interacts with NPHP1, ASAP1, ASAP2, ARHGAP26, SKAP2 and TGFB1I1. The Tyr-402 phosphorylated form interacts with SRC (via SH2 domain) and SRC family members. Forms a signaling complex with EPHA1, LCK and phosphatidylinositol 3-kinase; upon activation by EFNA1. Interacts with GRB2 (via SH2 domain). Interacts with P53/TP53 and MDM2. Interacts with MYLK. Interacts with BCAR1. Interacts with RB1CC1. Interacts with RHOU. Interacts with VAV1. Interacts with PDPK1. Interacts with LPXN and PTPN12. Interacts with SIRPA and SH2D3C. Interacts (hypophosphorylated) with PXN. Interacts with ARHGAP10. Interacts with KCNA2. In terms of processing, phosphorylated on tyrosine residues in response to various stimuli that elevate the intracellular calcium concentration; this activation is indirect and may be mediated by production of reactive oxygen species (ROS). Tyr-402 is the major autophosphorylation site, but other kinases can also phosphorylate Tyr-402. Autophosphorylation occurs in trans, i.e. one subunit of the dimeric receptor phosphorylates tyrosine residues on the other subunit. Phosphorylation at Tyr-402 promotes interaction with SRC and SRC family members, leading to phosphorylation at Tyr-579; Tyr-580 and Tyr-881. Phosphorylation at Tyr-881 is important for interaction with GRB2. Phosphorylated on tyrosine residues upon activation of FGR and PKC. Recruitment by NPHP1 to cell matrix adhesions initiates Tyr-402 phosphorylation. In monocytes, adherence to substrata is required for tyrosine phosphorylation and kinase activation. Angiotensin II, thapsigargin and L-alpha-lysophosphatidic acid (LPA) also induce autophosphorylation and increase kinase activity. Phosphorylation by MYLK promotes ITGB2 activation and is thus essential to trigger neutrophil transmigration during lung injury. Dephosphorylated by PTPN12. Highly expressed in pulmonary vein endothelial cells, lung and brain (at protein level). Isoform 1 is expressed at high levels in the brain (hippocampus, cerebral cortex and olfactory bulb) and poorly in the spleen and other tissues, whereas isoforms 2 and 3 are expressed in the spleen and brain (highest in cerebellum).

The protein localises to the cytoplasm. It localises to the perinuclear region. The protein resides in the cell membrane. Its subcellular location is the cell projection. It is found in the lamellipodium. The protein localises to the cell cortex. It localises to the nucleus. The protein resides in the cell junction. Its subcellular location is the focal adhesion. It carries out the reaction L-tyrosyl-[protein] + ATP = O-phospho-L-tyrosyl-[protein] + ADP + H(+). Activated in response to stimuli that lead to increased intracellular Ca(2+) levels; this activation is indirect and may be mediated by calcium-mediated production of reactive oxygen species (ROS). Activated by autophosphorylation at Tyr-402; this creates a binding site for SRC family kinases and leads to phosphorylation at additional tyrosine residues. Phosphorylation at Tyr-402, Tyr-579 and Tyr-580 is required for optimal kinase activity. Non-receptor protein-tyrosine kinase that regulates reorganization of the actin cytoskeleton, cell polarization, cell migration, adhesion, spreading and bone remodeling. Plays a role in the regulation of the humoral immune response, and is required for normal levels of marginal B-cells in the spleen and normal migration of splenic B-cells. Required for normal macrophage polarization and migration towards sites of inflammation. Regulates cytoskeleton rearrangement and cell spreading in T-cells, and contributes to the regulation of T-cell responses. Promotes osteoclastic bone resorption; this requires both PTK2B/PYK2 and SRC. May inhibit differentiation and activity of osteoprogenitor cells. Functions in signaling downstream of integrin and collagen receptors, immune receptors, G-protein coupled receptors (GPCR), cytokine, chemokine and growth factor receptors, and mediates responses to cellular stress. Forms multisubunit signaling complexes with SRC and SRC family members upon activation; this leads to the phosphorylation of additional tyrosine residues, creating binding sites for scaffold proteins, effectors and substrates. Regulates numerous signaling pathways. Promotes activation of phosphatidylinositol 3-kinase and of the AKT1 signaling cascade. Promotes activation of NOS3. Regulates production of the cellular messenger cGMP. Promotes activation of the MAP kinase signaling cascade, including activation of MAPK1/ERK2, MAPK3/ERK1 and MAPK8/JNK1. Promotes activation of Rho family GTPases, such as RHOA and RAC1. Recruits the ubiquitin ligase MDM2 to P53/TP53 in the nucleus, and thereby regulates P53/TP53 activity, P53/TP53 ubiquitination and proteasomal degradation. Acts as a scaffold, binding to both PDPK1 and SRC, thereby allowing SRC to phosphorylate PDPK1 at 'Tyr-9, 'Tyr-373', and 'Tyr-376'. Promotes phosphorylation of NMDA receptors by SRC family members, and thereby contributes to the regulation of NMDA receptor ion channel activity and intracellular Ca(2+) levels. May also regulate potassium ion transport by phosphorylation of potassium channel subunits. Phosphorylates SRC; this increases SRC kinase activity. Phosphorylates ASAP1, NPHP1, KCNA2 and SHC1. Promotes phosphorylation of ASAP2, RHOU and PXN; this requires both SRC and PTK2/PYK2. This is Protein-tyrosine kinase 2-beta (Ptk2b) from Rattus norvegicus (Rat).